Reading from the N-terminus, the 1257-residue chain is Neurocan core protein (1257 aa).

Residues 1 to 22 form the signal peptide; the sequence is MGAESVWASGLLVLWLLLLVSG. The region spanning 37–157 is the Ig-like V-type domain; the sequence is HMLKSGSGPI…EQDLVTLEVT (121 aa). 5 cysteine pairs are disulfide-bonded: C58–C139, C181–C252, C205–C226, C279–C354, and C303–C324. N-linked (GlcNAc...) asparagine glycosylation is present at N121. 2 Link domains span residues 159–254 and 258–356; these read VVFH…YCFA and GGEV…YCFR. An N-linked (GlcNAc...) asparagine glycan is attached at N339. The interval 361 to 391 is disordered; it reads TPQRGDSEIPSSGDEGEIVSAEGPPAPELKP. O-linked (Xyl...) (chondroitin sulfate) serine glycans are attached at residues S380 and S410. The segment covering 447-459 has biased composition (low complexity); sequence SSTGVPSPSSLGV. Disordered stretches follow at residues 447–493, 550–610, and 683–707; these read SSTG…FQQQ, GSLG…AVPS, and GAED…GSPE. A compositionally biased stretch (polar residues) spans 464–473; sequence TTPSGTQVAP. The span at 569 to 580 shows a compositional bias: low complexity; the sequence is SPSTVPSTDSTP. N-linked (GlcNAc...) asparagine glycosylation occurs at N737. Residue S944 is glycosylated (O-linked (Xyl...) (chondroitin sulfate) serine). The EGF-like 1 domain maps to 949–985; the sequence is PTDPCENNPCLHGGTCRTNGTMYGCSCDQGYAGENCE. Disulfide bonds link C953–C964, C958–C973, C975–C984, C991–C1002, C996–C1011, C1013–C1022, C1029–C1040, C1057–C1149, C1125–C1141, C1156–C1199, and C1185–C1212. N-linked (GlcNAc...) asparagine glycosylation is present at N967. The EGF-like 2; calcium-binding domain occupies 987–1023; the sequence is DIDDCLCSPCENGGTCIDEVNGFICLCLPSYGGNLCE. Positions 1025–1154 constitute a C-type lectin domain; sequence DTEGCDRGWH…LPYVCKKGTV (130 aa). Positions 1154–1214 constitute a Sushi domain; sequence VLCGPPPAVE…WDRPQIVCTK (61 aa). N1164 is a glycosylation site (N-linked (GlcNAc...) asparagine). The span at 1215–1244 shows a compositional bias: basic residues; the sequence is PRRSHRMRRHHHHPHRHHKPRKEHRKHKRH. The interval 1215–1257 is disordered; that stretch reads PRRSHRMRRHHHHPHRHHKPRKEHRKHKRHPAEDWEKDEGDFC.

The protein belongs to the aggrecan/versican proteoglycan family. In terms of processing, two isoforms were found that probably arise by proteolytic processing. The large isoform is predominant in early postnatal brain, the small isoform is found in adult brain. Post-translationally, O-glycosylated; contains chondroitin sulfate. As to expression, early postnatal and adult brain; not expressed in kidney, lung, liver and muscle.

Its subcellular location is the secreted. In terms of biological role, may modulate neuronal adhesion and neurite growth during development by binding to neural cell adhesion molecules (NG-CAM and N-CAM). Chondroitin sulfate proteoglycan; binds to hyaluronic acid. The chain is Neurocan core protein (Ncan) from Rattus norvegicus (Rat).